The primary structure comprises 92 residues: Small ribosomal subunit protein uS19c (92 aa).

Belongs to the universal ribosomal protein uS19 family.

Its subcellular location is the plastid. It is found in the chloroplast. Protein S19 forms a complex with S13 that binds strongly to the 16S ribosomal RNA. In Pinus koraiensis (Korean pine), this protein is Small ribosomal subunit protein uS19c.